Consider the following 428-residue polypeptide: Threonine synthase (428 aa).

N6-(pyridoxal phosphate)lysine is present on Lys107.

It belongs to the threonine synthase family. It depends on pyridoxal 5'-phosphate as a cofactor.

It catalyses the reaction O-phospho-L-homoserine + H2O = L-threonine + phosphate. Its pathway is amino-acid biosynthesis; L-threonine biosynthesis; L-threonine from L-aspartate: step 5/5. Its activity is regulated as follows. Is competitively inhibited by L-threo-3-hydroxyhomoserine phosphate. Its function is as follows. Catalyzes the gamma-elimination of phosphate from L-phosphohomoserine and the beta-addition of water to produce L-threonine. To a lesser extent, is able to slowly catalyze the deamination of L-threonine into alpha-ketobutyrate and that of L-serine and 3-chloroalanine into pyruvate. Is also able to rapidly convert vinylglycine to threonine, which proves that the pyridoxal p-quinonoid of vinylglycine is an intermediate in the TS reaction. The chain is Threonine synthase (thrC) from Escherichia coli (strain K12).